A 447-amino-acid chain; its full sequence is C4-dicarboxylate transport protein 3 (447 aa).

Helical transmembrane passes span threonine 5 to alanine 27, isoleucine 42 to methionine 64, alanine 77 to valine 99, leucine 146 to leucine 165, valine 186 to threonine 208, leucine 223 to leucine 245, isoleucine 315 to leucine 337, and phenylalanine 352 to leucine 374.

The protein belongs to the dicarboxylate/amino acid:cation symporter (DAACS) (TC 2.A.23) family.

It is found in the cell inner membrane. Functionally, responsible for the transport of dicarboxylates such as succinate, fumarate, and malate from the periplasm across the membrane. The protein is C4-dicarboxylate transport protein 3 (dctA3) of Ralstonia nicotianae (strain ATCC BAA-1114 / GMI1000) (Ralstonia solanacearum).